We begin with the raw amino-acid sequence, 339 residues long: Anthranilate phosphoribosyltransferase (339 aa).

5-phospho-alpha-D-ribose 1-diphosphate is bound by residues Gly81, 84-85, 91-94, 109-117, and Ser121; these read GD, NIST, and KHGNRAASS. Gly81 provides a ligand contact to anthranilate. A Mg(2+)-binding site is contributed by Ser93. Residue Asn112 participates in anthranilate binding. An anthranilate-binding site is contributed by Arg167. Mg(2+) contacts are provided by Asp226 and Glu227.

Belongs to the anthranilate phosphoribosyltransferase family. As to quaternary structure, homodimer. Mg(2+) is required as a cofactor.

The enzyme catalyses N-(5-phospho-beta-D-ribosyl)anthranilate + diphosphate = 5-phospho-alpha-D-ribose 1-diphosphate + anthranilate. It participates in amino-acid biosynthesis; L-tryptophan biosynthesis; L-tryptophan from chorismate: step 2/5. Its function is as follows. Catalyzes the transfer of the phosphoribosyl group of 5-phosphorylribose-1-pyrophosphate (PRPP) to anthranilate to yield N-(5'-phosphoribosyl)-anthranilate (PRA). The chain is Anthranilate phosphoribosyltransferase from Maricaulis maris (strain MCS10) (Caulobacter maris).